We begin with the raw amino-acid sequence, 388 residues long: Succinate--CoA ligase [ADP-forming] subunit beta (388 aa).

Residues 9 to 244 (KQLFAEYGLP…PSQDDPREAH (236 aa)) enclose the ATP-grasp domain. ATP is bound by residues lysine 46, 53-55 (GRG), glutamate 99, threonine 102, and glutamate 107. Positions 199 and 213 each coordinate Mg(2+). Residues asparagine 264 and 321 to 323 (GIV) each bind substrate.

It belongs to the succinate/malate CoA ligase beta subunit family. As to quaternary structure, heterotetramer of two alpha and two beta subunits. Mg(2+) is required as a cofactor.

The catalysed reaction is succinate + ATP + CoA = succinyl-CoA + ADP + phosphate. The enzyme catalyses GTP + succinate + CoA = succinyl-CoA + GDP + phosphate. It functions in the pathway carbohydrate metabolism; tricarboxylic acid cycle; succinate from succinyl-CoA (ligase route): step 1/1. In terms of biological role, succinyl-CoA synthetase functions in the citric acid cycle (TCA), coupling the hydrolysis of succinyl-CoA to the synthesis of either ATP or GTP and thus represents the only step of substrate-level phosphorylation in the TCA. The beta subunit provides nucleotide specificity of the enzyme and binds the substrate succinate, while the binding sites for coenzyme A and phosphate are found in the alpha subunit. The chain is Succinate--CoA ligase [ADP-forming] subunit beta from Pseudomonas syringae pv. syringae (strain B728a).